Here is a 398-residue protein sequence, read N- to C-terminus: AT-rich interactive domain-containing protein 6 (398 aa).

The interval Glu25–Lys87 is disordered. The 92-residue stretch at Pro106–Arg197 folds into the ARID domain. The segment at Ser213 to Ala236 is disordered. The sHSP domain occupies Val305–Gln398.

Belongs to the small heat shock protein (HSP20) family.

It localises to the nucleus. This Arabidopsis thaliana (Mouse-ear cress) protein is AT-rich interactive domain-containing protein 6 (ARID6).